Reading from the N-terminus, the 178-residue chain is ATP synthase subunit delta (178 aa).

It belongs to the ATPase delta chain family. In terms of assembly, F-type ATPases have 2 components, F(1) - the catalytic core - and F(0) - the membrane proton channel. F(1) has five subunits: alpha(3), beta(3), gamma(1), delta(1), epsilon(1). F(0) has three main subunits: a(1), b(2) and c(10-14). The alpha and beta chains form an alternating ring which encloses part of the gamma chain. F(1) is attached to F(0) by a central stalk formed by the gamma and epsilon chains, while a peripheral stalk is formed by the delta and b chains.

The protein resides in the cell inner membrane. Its function is as follows. F(1)F(0) ATP synthase produces ATP from ADP in the presence of a proton or sodium gradient. F-type ATPases consist of two structural domains, F(1) containing the extramembraneous catalytic core and F(0) containing the membrane proton channel, linked together by a central stalk and a peripheral stalk. During catalysis, ATP synthesis in the catalytic domain of F(1) is coupled via a rotary mechanism of the central stalk subunits to proton translocation. In terms of biological role, this protein is part of the stalk that links CF(0) to CF(1). It either transmits conformational changes from CF(0) to CF(1) or is implicated in proton conduction. The sequence is that of ATP synthase subunit delta from Pseudomonas fluorescens (strain Pf0-1).